The sequence spans 357 residues: S-adenosylmethionine:tRNA ribosyltransferase-isomerase (357 aa).

This sequence belongs to the QueA family. Monomer.

The protein resides in the cytoplasm. The catalysed reaction is 7-aminomethyl-7-carbaguanosine(34) in tRNA + S-adenosyl-L-methionine = epoxyqueuosine(34) in tRNA + adenine + L-methionine + 2 H(+). It functions in the pathway tRNA modification; tRNA-queuosine biosynthesis. Transfers and isomerizes the ribose moiety from AdoMet to the 7-aminomethyl group of 7-deazaguanine (preQ1-tRNA) to give epoxyqueuosine (oQ-tRNA). This Phenylobacterium zucineum (strain HLK1) protein is S-adenosylmethionine:tRNA ribosyltransferase-isomerase.